Here is a 186-residue protein sequence, read N- to C-terminus: Elongation factor P (186 aa).

It belongs to the elongation factor P family.

Its subcellular location is the cytoplasm. It participates in protein biosynthesis; polypeptide chain elongation. Its function is as follows. Involved in peptide bond synthesis. Stimulates efficient translation and peptide-bond synthesis on native or reconstituted 70S ribosomes in vitro. Probably functions indirectly by altering the affinity of the ribosome for aminoacyl-tRNA, thus increasing their reactivity as acceptors for peptidyl transferase. The sequence is that of Elongation factor P from Shewanella woodyi (strain ATCC 51908 / MS32).